A 207-amino-acid polypeptide reads, in one-letter code: MKKLFLASSFADVFDLFLDFAGNIQNKSITFIPTASKVEEVKFYVDDARNAFLQQGAFIDELDLSTASLAEITDKLAKNEMIYVSGGNTFFLLQELTRTGTAQLIQQHIQAGKMYIGESAGAMISAPNIDYVKYMDSLDQAPMLRDFTALNLVDFYVVPHYTNFPFVEAAQKIIDTYSTTLPLQPIDNHQAILVNNETKIIRGNHKG.

Active-site charge relay system residues include serine 119 and histidine 160.

It belongs to the peptidase S51 family.

This is an uncharacterized protein from Pasteurella multocida (strain Pm70).